Reading from the N-terminus, the 48-residue chain is Large ribosomal subunit protein eL40 (48 aa).

This sequence belongs to the eukaryotic ribosomal protein eL40 family.

The sequence is that of Large ribosomal subunit protein eL40 from Methanospirillum hungatei JF-1 (strain ATCC 27890 / DSM 864 / NBRC 100397 / JF-1).